A 123-amino-acid chain; its full sequence is Defensin beta 118 (123 aa).

Residues 1-19 form the signal peptide; it reads MKLLLLALPMLVLLPQVIP. Intrachain disulfides connect Cys-27–Cys-54, Cys-34–Cys-48, and Cys-38–Cys-55. The propeptide occupies 65–123; that stretch reads VPTTSPTPLSDSTRGVIDDILTVRFTTDYFEVSSKKNMVEESEVGQGTQTSLPNVHHSS. The disordered stretch occupies residues 100–123; that stretch reads KNMVEESEVGQGTQTSLPNVHHSS. A compositionally biased stretch (polar residues) spans 109-123; sequence GQGTQTSLPNVHHSS.

It belongs to the beta-defensin family. Post-translationally, the three-dimensional structure formed by the three intramolecular disulfide bridges is indispensable for antimicrobial activity.

Its subcellular location is the secreted. Functionally, host defense peptide that exhibits antimicrobial activity against both Gram-negative bacteria, such as E.coli and S.typhimurium, and Gram-positive bacteria, such as S.aureus and B.subtilis. Inhibits cell adhesion of E.coli on intestinal epithelial enterocytes. Causes rapid permeabilization of both the outer and inner membrane of E.coli, leading to morphological alterations on the bacterial surface. Binds to bacterial lipopolysaccharides (LPS) with high affinity, and may thereby be involved in immunoregulation through LPS neutralization. May contribute to epididymal innate immunity and protect the sperm against attack by microorganisms. This is Defensin beta 118 (DEFB118) from Pongo pygmaeus (Bornean orangutan).